The following is an 849-amino-acid chain: DNA mismatch repair protein MutS (849 aa).

602-609 (GPNMSGKS) contributes to the ATP binding site.

The protein belongs to the DNA mismatch repair MutS family.

Functionally, this protein is involved in the repair of mismatches in DNA. It is possible that it carries out the mismatch recognition step. This protein has a weak ATPase activity. The chain is DNA mismatch repair protein MutS from Streptococcus mutans serotype c (strain ATCC 700610 / UA159).